The primary structure comprises 399 residues: S-adenosylmethionine synthase (399 aa).

Histidine 16 is an ATP binding site. Aspartate 18 serves as a coordination point for Mg(2+). Glutamate 44 lines the K(+) pocket. L-methionine is bound by residues glutamate 57 and glutamine 100. Residues 100–110 (QSSDIAQGVNE) are flexible loop. Residues 177 to 179 (DAK), 244 to 245 (RF), aspartate 253, 259 to 260 (RK), alanine 276, and lysine 280 contribute to the ATP site. Position 253 (aspartate 253) interacts with L-methionine. Lysine 284 contacts L-methionine.

Belongs to the AdoMet synthase family. In terms of assembly, homotetramer; dimer of dimers. The cofactor is Mg(2+). Requires K(+) as cofactor.

It localises to the cytoplasm. It catalyses the reaction L-methionine + ATP + H2O = S-adenosyl-L-methionine + phosphate + diphosphate. Its pathway is amino-acid biosynthesis; S-adenosyl-L-methionine biosynthesis; S-adenosyl-L-methionine from L-methionine: step 1/1. Its function is as follows. Catalyzes the formation of S-adenosylmethionine (AdoMet) from methionine and ATP. The overall synthetic reaction is composed of two sequential steps, AdoMet formation and the subsequent tripolyphosphate hydrolysis which occurs prior to release of AdoMet from the enzyme. This is S-adenosylmethionine synthase from Lactococcus lactis subsp. lactis (strain IL1403) (Streptococcus lactis).